The primary structure comprises 295 residues: Cyclin-G1 (295 aa).

It belongs to the cyclin family. Cyclin G subfamily.

It localises to the nucleus. May play a role in growth regulation. Is associated with G2/M phase arrest in response to DNA damage. May be an intermediate by which p53 mediates its role as an inhibitor of cellular proliferation. This is Cyclin-G1 (CCNG1) from Sus scrofa (Pig).